Consider the following 195-residue polypeptide: dCTP deaminase (195 aa).

Residues 110 to 115 (RSSLAR), aspartate 128, 136 to 138 (VLE), tyrosine 171, lysine 178, and glutamine 182 each bind dCTP. The active-site Proton donor/acceptor is glutamate 138.

This sequence belongs to the dCTP deaminase family. In terms of assembly, homotrimer.

The enzyme catalyses dCTP + H2O + H(+) = dUTP + NH4(+). The protein operates within pyrimidine metabolism; dUMP biosynthesis; dUMP from dCTP (dUTP route): step 1/2. Its function is as follows. Catalyzes the deamination of dCTP to dUTP. In Idiomarina loihiensis (strain ATCC BAA-735 / DSM 15497 / L2-TR), this protein is dCTP deaminase.